The following is a 432-amino-acid chain: uncharacterized protein (432 aa).

Positions 1-14 are enriched in polar residues; it reads MSDTTDVPENQKSP. Residues 1–42 form a disordered region; the sequence is MSDTTDVPENQKSPKPSGKADKRKIEEKPENSSLKRKKFEDP. The segment covering 18–30 has biased composition (basic and acidic residues); the sequence is GKADKRKIEEKPE. In terms of domain architecture, S4 RNA-binding spans 85 to 148; that stretch reads RKMVEVFSGE…HEHPIRDLPI (64 aa). The active site involves aspartate 199.

Belongs to the pseudouridine synthase RluA family.

This is an uncharacterized protein from Caenorhabditis elegans.